Here is a 287-residue protein sequence, read N- to C-terminus: Thymidylate synthase (287 aa).

DUMP is bound at residue R21. A (6R)-5,10-methylene-5,6,7,8-tetrahydrofolate-binding site is contributed by N51. Residue R150 to R151 coordinates dUMP. C170 serves as the catalytic Nucleophile. Residues R190–D193, N201, and H231–Y233 each bind dUMP. D193 is a (6R)-5,10-methylene-5,6,7,8-tetrahydrofolate binding site. A286 contacts (6R)-5,10-methylene-5,6,7,8-tetrahydrofolate.

It belongs to the thymidylate synthase family. Bacterial-type ThyA subfamily. As to quaternary structure, homodimer.

It is found in the cytoplasm. The enzyme catalyses dUMP + (6R)-5,10-methylene-5,6,7,8-tetrahydrofolate = 7,8-dihydrofolate + dTMP. It participates in pyrimidine metabolism; dTTP biosynthesis. Catalyzes the reductive methylation of 2'-deoxyuridine-5'-monophosphate (dUMP) to 2'-deoxythymidine-5'-monophosphate (dTMP) while utilizing 5,10-methylenetetrahydrofolate (mTHF) as the methyl donor and reductant in the reaction, yielding dihydrofolate (DHF) as a by-product. This enzymatic reaction provides an intracellular de novo source of dTMP, an essential precursor for DNA biosynthesis. The protein is Thymidylate synthase of Mycoplasma genitalium (strain ATCC 33530 / DSM 19775 / NCTC 10195 / G37) (Mycoplasmoides genitalium).